We begin with the raw amino-acid sequence, 260 residues long: Coiled-coil domain-containing protein 172 (260 aa).

Positions 13–194 form a coiled coil; that stretch reads SEHQAEESRR…FEDKKHEAIC (182 aa).

This sequence belongs to the CCDC172 family. In terms of assembly, may interact with TEKT2.

The protein resides in the cytoplasm. It localises to the cell projection. It is found in the cilium. The protein is Coiled-coil domain-containing protein 172 (CCDC172) of Bos taurus (Bovine).